The following is an 85-amino-acid chain: Antitoxin VapB4 (85 aa).

This sequence belongs to the phD/YefM antitoxin family. In terms of assembly, interacts with cognate toxin VapC4.

Functionally, antitoxin component of a type II toxin-antitoxin (TA) system. Antitoxin that counteracts the effect of the VapC4 toxin. The chain is Antitoxin VapB4 (vapB4) from Mycobacterium tuberculosis (strain CDC 1551 / Oshkosh).